The sequence spans 581 residues: DNA primase (581 aa).

The segment at C40 to C64 adopts a CHC2-type zinc-finger fold. Positions Q259–P341 constitute a Toprim domain. Mg(2+) is bound by residues E265, D309, and D311.

This sequence belongs to the DnaG primase family. As to quaternary structure, monomer. Interacts with DnaB. It depends on Zn(2+) as a cofactor. Requires Mg(2+) as cofactor.

It catalyses the reaction ssDNA + n NTP = ssDNA/pppN(pN)n-1 hybrid + (n-1) diphosphate.. In terms of biological role, RNA polymerase that catalyzes the synthesis of short RNA molecules used as primers for DNA polymerase during DNA replication. The chain is DNA primase from Salmonella typhimurium (strain LT2 / SGSC1412 / ATCC 700720).